Here is a 111-residue protein sequence, read N- to C-terminus: Phosphoribosyl-ATP pyrophosphatase (111 aa).

The protein belongs to the PRA-PH family.

It is found in the cytoplasm. It catalyses the reaction 1-(5-phospho-beta-D-ribosyl)-ATP + H2O = 1-(5-phospho-beta-D-ribosyl)-5'-AMP + diphosphate + H(+). Its pathway is amino-acid biosynthesis; L-histidine biosynthesis; L-histidine from 5-phospho-alpha-D-ribose 1-diphosphate: step 2/9. This chain is Phosphoribosyl-ATP pyrophosphatase, found in Pseudomonas entomophila (strain L48).